Reading from the N-terminus, the 830-residue chain is Periplasmic nitrate reductase (830 aa).

The tat-type signal signal peptide spans 1–31 (MKLSRRDFMKANAAVAAAAAAGMTIPTVAKA). Residues 39–95 (IKWDKAPCRFCGTGCGVLVGTQNGRIVASQGDPDSPVNRGLNCIKGYFLPKIMYGKD) form the 4Fe-4S Mo/W bis-MGD-type domain. Cysteine 46, cysteine 49, cysteine 53, and cysteine 81 together coordinate [4Fe-4S] cluster. Mo-bis(molybdopterin guanine dinucleotide) is bound by residues lysine 83, glutamine 150, asparagine 175, cysteine 179, 212–219 (WGSNMAEM), 243–247 (STYEH), 262–264 (QTD), methionine 372, glutamine 376, asparagine 482, 508–509 (SD), lysine 531, aspartate 558, and 718–727 (TGRVLEHWHT). Phenylalanine 794 is a binding site for substrate. Mo-bis(molybdopterin guanine dinucleotide)-binding residues include asparagine 802 and lysine 819.

It belongs to the prokaryotic molybdopterin-containing oxidoreductase family. NasA/NapA/NarB subfamily. As to quaternary structure, component of the periplasmic nitrate reductase NapAB complex composed of NapA and NapB. It depends on [4Fe-4S] cluster as a cofactor. The cofactor is Mo-bis(molybdopterin guanine dinucleotide). Post-translationally, predicted to be exported by the Tat system. The position of the signal peptide cleavage has not been experimentally proven.

The protein localises to the periplasm. The enzyme catalyses 2 Fe(II)-[cytochrome] + nitrate + 2 H(+) = 2 Fe(III)-[cytochrome] + nitrite + H2O. In terms of biological role, catalytic subunit of the periplasmic nitrate reductase complex NapAB. Receives electrons from NapB and catalyzes the reduction of nitrate to nitrite. The protein is Periplasmic nitrate reductase of Yersinia pestis bv. Antiqua (strain Antiqua).